The sequence spans 1416 residues: DNA-directed RNA polymerase subunit beta (1416 aa).

The tract at residues 1388–1416 (AKAAREQAEGELGGPLGTPRGAAAEKNTA) is disordered.

It belongs to the RNA polymerase beta chain family. The RNAP catalytic core consists of 2 alpha, 1 beta, 1 beta' and 1 omega subunit. When a sigma factor is associated with the core the holoenzyme is formed, which can initiate transcription.

The catalysed reaction is RNA(n) + a ribonucleoside 5'-triphosphate = RNA(n+1) + diphosphate. Its function is as follows. DNA-dependent RNA polymerase catalyzes the transcription of DNA into RNA using the four ribonucleoside triphosphates as substrates. The chain is DNA-directed RNA polymerase subunit beta from Anaeromyxobacter sp. (strain Fw109-5).